A 151-amino-acid chain; its full sequence is SsrA-binding protein (151 aa).

The protein belongs to the SmpB family.

The protein resides in the cytoplasm. Its function is as follows. Required for rescue of stalled ribosomes mediated by trans-translation. Binds to transfer-messenger RNA (tmRNA), required for stable association of tmRNA with ribosomes. tmRNA and SmpB together mimic tRNA shape, replacing the anticodon stem-loop with SmpB. tmRNA is encoded by the ssrA gene; the 2 termini fold to resemble tRNA(Ala) and it encodes a 'tag peptide', a short internal open reading frame. During trans-translation Ala-aminoacylated tmRNA acts like a tRNA, entering the A-site of stalled ribosomes, displacing the stalled mRNA. The ribosome then switches to translate the ORF on the tmRNA; the nascent peptide is terminated with the 'tag peptide' encoded by the tmRNA and targeted for degradation. The ribosome is freed to recommence translation, which seems to be the essential function of trans-translation. In Flavobacterium johnsoniae (strain ATCC 17061 / DSM 2064 / JCM 8514 / BCRC 14874 / CCUG 350202 / NBRC 14942 / NCIMB 11054 / UW101) (Cytophaga johnsonae), this protein is SsrA-binding protein.